The following is a 413-amino-acid chain: Tryptophan synthase beta chain 2 (413 aa).

Lys-107 carries the post-translational modification N6-(pyridoxal phosphate)lysine.

The protein belongs to the TrpB family. As to quaternary structure, tetramer of two alpha and two beta chains. Pyridoxal 5'-phosphate serves as cofactor.

It catalyses the reaction (1S,2R)-1-C-(indol-3-yl)glycerol 3-phosphate + L-serine = D-glyceraldehyde 3-phosphate + L-tryptophan + H2O. Its pathway is amino-acid biosynthesis; L-tryptophan biosynthesis; L-tryptophan from chorismate: step 5/5. The beta subunit is responsible for the synthesis of L-tryptophan from indole and L-serine. The polypeptide is Tryptophan synthase beta chain 2 (trpB2) (Nostoc sp. (strain PCC 7120 / SAG 25.82 / UTEX 2576)).